Consider the following 343-residue polypeptide: D-alanine--D-alanine ligase (343 aa).

In terms of domain architecture, ATP-grasp spans 129–335; sequence KYVLEHFNIK…YSKLIDELIE (207 aa). An ATP-binding site is contributed by 162 to 217; sequence ENKLGYAVFIKPSNSGSSVGITKAHNRKELEAGLEEAMKYDRKILVEEALNAREIE. Residues Asp-288, Glu-302, and Asn-304 each contribute to the Mg(2+) site.

It belongs to the D-alanine--D-alanine ligase family. Mg(2+) is required as a cofactor. The cofactor is Mn(2+).

The protein resides in the cytoplasm. It catalyses the reaction 2 D-alanine + ATP = D-alanyl-D-alanine + ADP + phosphate + H(+). The protein operates within cell wall biogenesis; peptidoglycan biosynthesis. Functionally, cell wall formation. The sequence is that of D-alanine--D-alanine ligase from Clostridium acetobutylicum (strain ATCC 824 / DSM 792 / JCM 1419 / IAM 19013 / LMG 5710 / NBRC 13948 / NRRL B-527 / VKM B-1787 / 2291 / W).